We begin with the raw amino-acid sequence, 136 residues long: Probable acyltransferase SID5 (136 aa).

It participates in siderophore biosynthesis. In terms of biological role, probable acyltransferase; part of the gene cluster that mediates the biosynthesis of hydroxamate-containing siderophores that play a critical role in virulence via intracellular iron acquisition during macrophage infection. The protein is Probable acyltransferase SID5 of Ajellomyces capsulatus (Darling's disease fungus).